We begin with the raw amino-acid sequence, 193 residues long: Ion-translocating oxidoreductase complex subunit A (193 aa).

The next 6 helical transmembrane spans lie at L5–L25, I39–M59, F62–A82, L102–L122, A134–I154, and S171–V191.

Belongs to the NqrDE/RnfAE family. As to quaternary structure, the complex is composed of six subunits: RnfA, RnfB, RnfC, RnfD, RnfE and RnfG.

It is found in the cell inner membrane. In terms of biological role, part of a membrane-bound complex that couples electron transfer with translocation of ions across the membrane. The chain is Ion-translocating oxidoreductase complex subunit A from Proteus mirabilis (strain HI4320).